The following is a 306-amino-acid chain: MATH domain and coiled-coil domain-containing protein At3g29580 (306 aa).

Residues 6-132 enclose the MATH domain; that stretch reads DNKFTWVIKN…NGEIKIVVEF (127 aa). Residues 253-298 are a coiled coil; it reads FKLDWLEKKLNEVLEKKEKEESYETRMREIEEEMKDLKAKALDVGA.

The sequence is that of MATH domain and coiled-coil domain-containing protein At3g29580 from Arabidopsis thaliana (Mouse-ear cress).